The chain runs to 1298 residues: Phosphoribosylformylglycinamidine synthase (1298 aa).

The tract at residues Thr298–Ala328 is disordered. Residues Gly305 to Asp316, Thr384 to Tyr386, and Ala676 each bind ATP. Mg(2+) contacts are provided by Asp677, Glu716, Asn720, and Asp884. An ATP-binding site is contributed by Ser886. The Glutamine amidotransferase type-1 domain maps to Val1045–Asp1298. Cys1138 (nucleophile) is an active-site residue. Catalysis depends on residues His1263 and Glu1265.

It in the N-terminal section; belongs to the FGAMS family. As to quaternary structure, monomer.

The protein resides in the cytoplasm. It carries out the reaction N(2)-formyl-N(1)-(5-phospho-beta-D-ribosyl)glycinamide + L-glutamine + ATP + H2O = 2-formamido-N(1)-(5-O-phospho-beta-D-ribosyl)acetamidine + L-glutamate + ADP + phosphate + H(+). The protein operates within purine metabolism; IMP biosynthesis via de novo pathway; 5-amino-1-(5-phospho-D-ribosyl)imidazole from N(2)-formyl-N(1)-(5-phospho-D-ribosyl)glycinamide: step 1/2. Functionally, phosphoribosylformylglycinamidine synthase involved in the purines biosynthetic pathway. Catalyzes the ATP-dependent conversion of formylglycinamide ribonucleotide (FGAR) and glutamine to yield formylglycinamidine ribonucleotide (FGAM) and glutamate. The polypeptide is Phosphoribosylformylglycinamidine synthase (Pseudomonas aeruginosa (strain ATCC 15692 / DSM 22644 / CIP 104116 / JCM 14847 / LMG 12228 / 1C / PRS 101 / PAO1)).